Here is a 472-residue protein sequence, read N- to C-terminus: Trigger factor (472 aa).

In terms of domain architecture, PPIase FKBP-type spans 174 to 261; that stretch reads GDIALVSFKG…LEDLKIKELP (88 aa). The interval 438–472 is disordered; the sequence is EKTPEKARDQIKEKSSKKKTTKTNKEKKSSKTPKS. Residues 439–451 show a composition bias toward basic and acidic residues; the sequence is KTPEKARDQIKEK.

It belongs to the FKBP-type PPIase family. Tig subfamily.

The protein resides in the cytoplasm. The enzyme catalyses [protein]-peptidylproline (omega=180) = [protein]-peptidylproline (omega=0). Involved in protein export. Acts as a chaperone by maintaining the newly synthesized protein in an open conformation. Functions as a peptidyl-prolyl cis-trans isomerase. The sequence is that of Trigger factor from Prochlorococcus marinus (strain NATL2A).